The primary structure comprises 324 residues: GTP cyclohydrolase 1 (324 aa).

Disordered regions lie at residues 33 to 59 (GRNNSVCSTSSTSGTSSLADRQQNQAE) and 79 to 119 (VPLA…TPGH). The segment covering 40–49 (STSSTSGTSS) has biased composition (low complexity). Polar residues-rich tracts occupy residues 50-59 (LADRQQNQAE) and 93-117 (TNGSSPDSDGTQPKTPLTPRTSTTP). 3 residues coordinate Zn(2+): Cys214, His217, and Cys285.

This sequence belongs to the GTP cyclohydrolase I family. Toroid-shaped homodecamer, composed of two pentamers of five dimers. Isoform B is expressed almost exclusively in adult heads.

The catalysed reaction is GTP + H2O = 7,8-dihydroneopterin 3'-triphosphate + formate + H(+). It functions in the pathway cofactor biosynthesis; 7,8-dihydroneopterin triphosphate biosynthesis; 7,8-dihydroneopterin triphosphate from GTP: step 1/1. In terms of biological role, isoform B is required for eye pigment production, Isoform C may be required for normal embryonic development and segment pattern formation. The polypeptide is GTP cyclohydrolase 1 (Pu) (Drosophila melanogaster (Fruit fly)).